Reading from the N-terminus, the 35-residue chain is MRIAKIGVIALFLFMALGGIGGVMLAGYTFILRAG.

Residues 6–26 (IGVIALFLFMALGGIGGVMLA) form a helical membrane-spanning segment.

The protein belongs to the UPF0387 family.

It is found in the cell inner membrane. The chain is UPF0387 membrane protein YohO from Shigella boydii serotype 4 (strain Sb227).